We begin with the raw amino-acid sequence, 264 residues long: Cell division protein DivIB (264 aa).

The Cytoplasmic segment spans residues Met1–Lys23. The chain crosses the membrane as a helical span at residues Leu24–Pro44. Over Tyr45–Gln264 the chain is Extracellular. The POTRA domain occupies Ser46 to Gln114.

This sequence belongs to the FtsQ/DivIB family. DivIB subfamily.

The protein resides in the cell membrane. Its function is as follows. Cell division protein that may be involved in stabilizing or promoting the assembly of the division complex. This chain is Cell division protein DivIB, found in Brevibacillus brevis (strain 47 / JCM 6285 / NBRC 100599).